Here is a 246-residue protein sequence, read N- to C-terminus: Large ribosomal subunit protein uL3 (246 aa).

N5-methylglutamine is present on Gln151.

It belongs to the universal ribosomal protein uL3 family. Part of the 50S ribosomal subunit. Forms a cluster with proteins L14 and L19. Methylated by PrmB.

Its function is as follows. One of the primary rRNA binding proteins, it binds directly near the 3'-end of the 23S rRNA, where it nucleates assembly of the 50S subunit. In Bartonella quintana (strain Toulouse) (Rochalimaea quintana), this protein is Large ribosomal subunit protein uL3.